The primary structure comprises 492 residues: N-succinylglutamate 5-semialdehyde dehydrogenase (492 aa).

220-225 is a binding site for NAD(+); sequence GSANTG. Active-site residues include Glu-243 and Cys-277.

This sequence belongs to the aldehyde dehydrogenase family. AstD subfamily.

The catalysed reaction is N-succinyl-L-glutamate 5-semialdehyde + NAD(+) + H2O = N-succinyl-L-glutamate + NADH + 2 H(+). The protein operates within amino-acid degradation; L-arginine degradation via AST pathway; L-glutamate and succinate from L-arginine: step 4/5. Catalyzes the NAD-dependent reduction of succinylglutamate semialdehyde into succinylglutamate. In Escherichia coli O139:H28 (strain E24377A / ETEC), this protein is N-succinylglutamate 5-semialdehyde dehydrogenase.